The sequence spans 745 residues: DEAD-box ATP-dependent RNA helicase 3A, chloroplastic (745 aa).

The transit peptide at 1–41 (MASLVTLPAIAFSNPATASGAVRLRAAAFRCWALRRRGWAV) directs the protein to the chloroplast. Positions 88-116 (LAIARLGLPDELVATLEKRGITHLFPIQR) match the Q motif motif. The Helicase ATP-binding domain maps to 119-295 (LIPALGGRDL…RRYLNNPLTI (177 aa)). Residue 132-139 (AKTGTGKT) coordinates ATP. A DEAD box motif is present at residues 243 to 246 (DEAD). The 146-residue stretch at 324 to 469 (ILSDLITVYA…ISPPSIEEVL (146 aa)) folds into the Helicase C-terminal domain. Positions 606–724 (LTKISKLPAL…SLGGRESSRS (119 aa)) are disordered. The span at 641–650 (GGGASRGRGG) shows a compositional bias: gly residues. Basic and acidic residues predominate over residues 656–670 (EDRYRRGGRSLRSDN). A compositionally biased stretch (low complexity) spans 687–724 (RSSSSFGGRSSSYGSRGSPSPSFGVRSSSLGGRESSRS). The CCHC-type zinc-finger motif lies at 727 to 744 (GACFNCGESGHRASDCPN).

The protein belongs to the DEAD box helicase family. DDX21/DDX50 subfamily.

It is found in the plastid. It localises to the chloroplast. The enzyme catalyses ATP + H2O = ADP + phosphate + H(+). Its function is as follows. Nuclear genome-encoded factor involved in ribosome biogenesis in chloroplasts. Binds specific group II introns in chloroplasts and facilitates their splicing. Required for normal development of chloroplasts. This chain is DEAD-box ATP-dependent RNA helicase 3A, chloroplastic, found in Zea mays (Maize).